Consider the following 355-residue polypeptide: Homeobox protein knotted-1-like 12 (355 aa).

Disordered stretches follow at residues 52-82 (AAGP…GGGE) and 207-233 (ECVG…PRAE). Residues 60–75 (GHGHPHHGGGHHHSKH) are compositionally biased toward basic residues. The span at 218–233 (PSGRENEPPEIDPRAE) shows a compositional bias: basic and acidic residues. One can recognise an ELK domain in the interval 236-256 (ELKFQLLKKYSGYLSSLRQEF). The segment at residues 257–320 (SKKKKKGKLP…NQRKRHWKPS (64 aa)) is a DNA-binding region (homeobox; TALE-type).

The protein belongs to the TALE/KNOX homeobox family. In terms of tissue distribution, expressed in stems, rachis and inflorescence.

It localises to the nucleus. Functionally, probable transcription factor that may be involved in shoot formation during embryogenesis. The protein is Homeobox protein knotted-1-like 12 (OSH15) of Oryza sativa subsp. japonica (Rice).